Consider the following 640-residue polypeptide: Endoglucanase 1 (640 aa).

The signal sequence occupies residues 1–24 (MARRGGAAASSSMANLLGVALVLA). The active-site Nucleophile is the Asp-94. Residues His-433, Asp-485, and Glu-494 contribute to the active site. N-linked (GlcNAc...) asparagine glycans are attached at residues Asn-528 and Asn-548.

Belongs to the glycosyl hydrolase 9 (cellulase E) family. In terms of tissue distribution, expressed in roots, leaf sheaths and flowers.

The protein localises to the secreted. The enzyme catalyses Endohydrolysis of (1-&gt;4)-beta-D-glucosidic linkages in cellulose, lichenin and cereal beta-D-glucans.. The chain is Endoglucanase 1 (GLU7) from Oryza sativa subsp. japonica (Rice).